The following is a 312-amino-acid chain: 2-phosphoglycerate kinase (312 aa).

The ATP-cone domain occupies 8–95 (SRILVTDKEY…LWRRVLKKHS (88 aa)).

The protein belongs to the 2-phosphoglycerate kinase family. A divalent metal cation is required as a cofactor.

The enzyme catalyses (2R)-2-phosphoglycerate + ATP = (2R)-2,3-bisphosphoglycerate + ADP + H(+). Its pathway is thermoadapter biosynthesis; cyclic 2,3-diphosphoglycerate biosynthesis; cyclic 2,3-diphosphoglycerate from 2-phospho-D-glycerate: step 1/2. In terms of biological role, catalyzes the phosphorylation of 2-phosphoglycerate to 2,3-diphosphoglycerate. Involved in the biosynthesis of cyclic 2,3-bisphosphoglycerate, a thermoprotectant. The sequence is that of 2-phosphoglycerate kinase from Methanococcus maripaludis (strain C7 / ATCC BAA-1331).